Here is a 381-residue protein sequence, read N- to C-terminus: MYINYLKDLIGFKSVTPESDGAIEYIDDLLKQHGFKTEIKIFGDSKSEQATNLYAVFGSNEPNICFVGHVDVVPAGNHELWHNASPFKASHQDGKIYGRGAVDMKGAIACFLAASLDFIKNNTGFKGSISFLLTSDEEGKAKHGTKEMLQYIYDQGHKMDFAIVGEPTCEKEIGDTIKIGRRGSVNFKLNIEGLSGHVAYPHKANNPLPCLIKILNELTNIRLDKGTEFFQSSNLEVTNIDVGNNTSNVIPASTEASFNIRFNNLHSAETLAKQVEEIIKRYCKEYKVDYKLEYSSSADSFIQNPNDKIKDFADIVERVLKIKPEFSTSGGTSDARFVKDYCPLVEFGLLSETAHKINEYTKISDLQKLYDVYYNFLMEIL.

His69 contributes to the Zn(2+) binding site. Asp71 is an active-site residue. Asp103 contributes to the Zn(2+) binding site. The active-site Proton acceptor is the Glu137. Zn(2+) contacts are provided by Glu138, Glu166, and His355.

Belongs to the peptidase M20A family. DapE subfamily. In terms of assembly, homodimer. Zn(2+) serves as cofactor. Requires Co(2+) as cofactor.

The catalysed reaction is N-succinyl-(2S,6S)-2,6-diaminopimelate + H2O = (2S,6S)-2,6-diaminopimelate + succinate. The protein operates within amino-acid biosynthesis; L-lysine biosynthesis via DAP pathway; LL-2,6-diaminopimelate from (S)-tetrahydrodipicolinate (succinylase route): step 3/3. Catalyzes the hydrolysis of N-succinyl-L,L-diaminopimelic acid (SDAP), forming succinate and LL-2,6-diaminopimelate (DAP), an intermediate involved in the bacterial biosynthesis of lysine and meso-diaminopimelic acid, an essential component of bacterial cell walls. The protein is Succinyl-diaminopimelate desuccinylase of Rickettsia felis (strain ATCC VR-1525 / URRWXCal2) (Rickettsia azadi).